A 531-amino-acid polypeptide reads, in one-letter code: Probable rhamnogalacturonate lyase A (531 aa).

Positions 1-20 are cleaved as a signal peptide; it reads MLSKALFFSSLPLWAKVASA. Intrachain disulfides connect Cys-50–Cys-93 and Cys-184–Cys-193. N-linked (GlcNAc...) asparagine glycosylation is present at Asn-351.

The protein belongs to the polysaccharide lyase 4 family.

It is found in the secreted. The enzyme catalyses Endotype eliminative cleavage of L-alpha-rhamnopyranosyl-(1-&gt;4)-alpha-D-galactopyranosyluronic acid bonds of rhamnogalacturonan I domains in ramified hairy regions of pectin leaving L-rhamnopyranose at the reducing end and 4-deoxy-4,5-unsaturated D-galactopyranosyluronic acid at the non-reducing end.. Its function is as follows. Pectinolytic enzymes consist of four classes of enzymes: pectin lyase, polygalacturonase, pectin methylesterase and rhamnogalacturonase. Degrades the rhamnogalacturonan I (RG-I) backbone of pectin. The sequence is that of Probable rhamnogalacturonate lyase A (rglA) from Aspergillus terreus (strain NIH 2624 / FGSC A1156).